The primary structure comprises 256 residues: Thiazole synthase (256 aa).

Lys-96 (schiff-base intermediate with DXP) is an active-site residue. 1-deoxy-D-xylulose 5-phosphate-binding positions include Gly-157, 183–184, and 205–206; these read AG and NT.

This sequence belongs to the ThiG family. Homotetramer. Forms heterodimers with either ThiH or ThiS.

The protein localises to the cytoplasm. It catalyses the reaction [ThiS sulfur-carrier protein]-C-terminal-Gly-aminoethanethioate + 2-iminoacetate + 1-deoxy-D-xylulose 5-phosphate = [ThiS sulfur-carrier protein]-C-terminal Gly-Gly + 2-[(2R,5Z)-2-carboxy-4-methylthiazol-5(2H)-ylidene]ethyl phosphate + 2 H2O + H(+). It participates in cofactor biosynthesis; thiamine diphosphate biosynthesis. Functionally, catalyzes the rearrangement of 1-deoxy-D-xylulose 5-phosphate (DXP) to produce the thiazole phosphate moiety of thiamine. Sulfur is provided by the thiocarboxylate moiety of the carrier protein ThiS. In vitro, sulfur can be provided by H(2)S. The sequence is that of Thiazole synthase from Bacillus anthracis.